A 124-amino-acid chain; its full sequence is Large ribosomal subunit protein uL18 (124 aa).

It belongs to the universal ribosomal protein uL18 family. Part of the 50S ribosomal subunit; part of the 5S rRNA/L5/L18/L25 subcomplex. Contacts the 5S and 23S rRNAs.

This is one of the proteins that bind and probably mediate the attachment of the 5S RNA into the large ribosomal subunit, where it forms part of the central protuberance. The sequence is that of Large ribosomal subunit protein uL18 from Thermomicrobium roseum (strain ATCC 27502 / DSM 5159 / P-2).